Here is an 88-residue protein sequence, read N- to C-terminus: Cell division topological specificity factor (88 aa).

It belongs to the MinE family.

Functionally, prevents the cell division inhibition by proteins MinC and MinD at internal division sites while permitting inhibition at polar sites. This ensures cell division at the proper site by restricting the formation of a division septum at the midpoint of the long axis of the cell. In Cronobacter sakazakii (strain ATCC BAA-894) (Enterobacter sakazakii), this protein is Cell division topological specificity factor.